Here is a 160-residue protein sequence, read N- to C-terminus: MTLNFNPLETNLVNLAIVIGVLVWFLRGFLGGILDRRRQAILQELQDAETRLKTATEELSKAQSDLAAAQQKADKIRVDGEARAAAIRSDGEQRTIAAMAAVKQGAAADADAEAARIKDILRREAALAAIDKVLSDLPSRLDDQAQARLIDSTITNLENA.

A helical transmembrane segment spans residues 13-33 (VNLAIVIGVLVWFLRGFLGGI).

The protein belongs to the ATPase B chain family. F-type ATPases have 2 components, F(1) - the catalytic core - and F(0) - the membrane proton channel. F(1) has five subunits: alpha(3), beta(3), gamma(1), delta(1), epsilon(1). F(0) has four main subunits: a(1), b(1), b'(1) and c(10-14). The alpha and beta chains form an alternating ring which encloses part of the gamma chain. F(1) is attached to F(0) by a central stalk formed by the gamma and epsilon chains, while a peripheral stalk is formed by the delta, b and b' chains.

It is found in the cellular thylakoid membrane. In terms of biological role, f(1)F(0) ATP synthase produces ATP from ADP in the presence of a proton or sodium gradient. F-type ATPases consist of two structural domains, F(1) containing the extramembraneous catalytic core and F(0) containing the membrane proton channel, linked together by a central stalk and a peripheral stalk. During catalysis, ATP synthesis in the catalytic domain of F(1) is coupled via a rotary mechanism of the central stalk subunits to proton translocation. Functionally, component of the F(0) channel, it forms part of the peripheral stalk, linking F(1) to F(0). This Parasynechococcus marenigrum (strain WH8102) protein is ATP synthase subunit b.